The following is a 232-amino-acid chain: Chaperone protein CssC (232 aa).

An N-terminal signal peptide occupies residues 1 to 20 (MKSKLIILLMLVPFSSFSTE).

Belongs to the periplasmic pilus chaperone family.

The protein localises to the periplasm. Functionally, involved in the biogenesis of the CS6 fimbria. The polypeptide is Chaperone protein CssC (cssC) (Escherichia coli).